Reading from the N-terminus, the 343-residue chain is MSKIKVLVVDDSAIVRKIFTEELSKYPDIEVVGSAPDPFVARDKIVHLKPDVITLDIEMPRMDGLTFLKKLMRHYPLPAIIVSSLTPKGGKLTLEAMDIGAVDAIAKPGSSYSVGDMSGQLVEKIRAASGARVVRKSTQEMFQPGSRLSIRSLAETSNKVIAIGASTGGTEALKNVLSRMPPDSPGILVVQHMPANFTTAFAERLNSLCQIGVKEAADNDSVTPGTALIAPGNYHMILRRSGARYYVQIKMGPMVHHQRPAVDVLFKSTAKYAGANAIGVILTGMGADGAAGLLEMKQMGAGTIAQNEKSCIVYGMPKEAVKIGAVDKIVHLDSIADEIVRMV.

The Response regulatory domain occupies 5–122; it reads KVLVVDDSAI…SVGDMSGQLV (118 aa). 4-aspartylphosphate is present on aspartate 56. Residues 154-343 form the CheB-type methylesterase domain; sequence AETSNKVIAI…SIADEIVRMV (190 aa). Residues serine 166, histidine 192, and aspartate 288 contribute to the active site.

It belongs to the CheB family. Post-translationally, phosphorylated by CheA. Phosphorylation of the N-terminal regulatory domain activates the methylesterase activity.

It localises to the cytoplasm. The catalysed reaction is [protein]-L-glutamate 5-O-methyl ester + H2O = L-glutamyl-[protein] + methanol + H(+). It catalyses the reaction L-glutaminyl-[protein] + H2O = L-glutamyl-[protein] + NH4(+). Involved in chemotaxis. Part of a chemotaxis signal transduction system that modulates chemotaxis in response to various stimuli. Catalyzes the demethylation of specific methylglutamate residues introduced into the chemoreceptors (methyl-accepting chemotaxis proteins or MCP) by CheR. Also mediates the irreversible deamidation of specific glutamine residues to glutamic acid. This chain is Protein-glutamate methylesterase/protein-glutamine glutaminase 2, found in Syntrophus aciditrophicus (strain SB).